The primary structure comprises 1338 residues: Centrosomal P4.1-associated protein (1338 aa).

2 disordered regions span residues 78-99 (QKLESNSPYKPQSDKSETHTGF) and 190-211 (GLSLLPDDQSQKHRSPGNTTTG). Phosphoserine is present on residues serine 260 and serine 317. The segment at 320–395 (VANIEERPIK…FTNAKSKFQK (76 aa)) is alpha/beta-tubulin binding. Disordered regions lie at residues 387–415 (TNAKSKFQKGKESKLVTNQSTSEDQPLFK), 437–480 (PILK…QTGK), and 522–552 (QGKDRLPLSTGPASRLAAKSPIRETMKESES). Residues 401–410 (LVTNQSTSED) show a composition bias toward polar residues. Position 541 is a phosphoserine (serine 541). Over residues 542–551 (PIRETMKESE) the composition is skewed to basic and acidic residues. Phosphoserine; by PLK2 is present on residues serine 590 and serine 596. 3 disordered regions span residues 612-790 (HRMS…LSMS), 846-903 (VKRG…DNAR), and 1088-1158 (TQVE…HPDG). The span at 636–651 (NRSEDLDHTAREKESE) shows a compositional bias: basic and acidic residues. The segment covering 680 to 690 (QKSTSENQTEW) has biased composition (polar residues). A compositionally biased stretch (basic and acidic residues) spans 718–765 (STEDRERGISSREDSPQVCDDKGPFKDTRTQEDKRRDVDLDLSDKDYS). Phosphoserine is present on serine 760. The span at 781–790 (PSRSSSLSMS) shows a compositional bias: low complexity. The interaction with STIL stretch occupies residues 896–1338 (QPPGDNARSQ…EGNVLMDTEL (443 aa)).

It belongs to the TCP10 family. As to quaternary structure, forms homodimers. Associates with microtubules plus ends; binds to beta-tubulin subunits exposed on microtubule outer surface at its distal tip; also associates with microtubule lattice. Associated with the gamma-tubulin complex. Interacts with the head domain of EPB41. Interacts with LYST. Interacts with CEP152 (via C-terminus). Interacts with STIL. Forms a complex with STIL and SASS6. Post-translationally, phosphorylation at Ser-590 and Ser-596 by PLK2 is required for procentriole formation and centriole elongation. Phosphorylation by PLK2 oscillates during the cell cycle: it increases at G1/S transition and decreases during the exit from mitosis. Phosphorylation at Ser-596 is also mediated by PLK4 but is not a critical step in PLK4 function in procentriole assembly.

The protein localises to the cytoplasm. It localises to the cytoskeleton. The protein resides in the microtubule organizing center. It is found in the centrosome. Its subcellular location is the centriole. Functionally, plays an important role in cell division and centrosome function by participating in centriole duplication. Inhibits microtubule nucleation from the centrosome. Involved in the regulation of slow processive growth of centriolar microtubules. Acts as microtubule plus-end tracking protein that stabilizes centriolar microtubules and inhibits microtubule polymerization and extension from the distal ends of centrioles. Required for centriole elongation and for STIL-mediated centriole amplification. Required for the recruitment of CEP295 to the proximal end of new-born centrioles at the centriolar microtubule wall during early S phase in a PLK4-dependent manner. May be involved in the control of centriolar-microtubule growth by acting as a regulator of tubulin release. This chain is Centrosomal P4.1-associated protein (CPAP), found in Pan troglodytes (Chimpanzee).